A 243-amino-acid chain; its full sequence is UPF0688 protein C1orf174 (243 aa).

Disordered stretches follow at residues 78-100 (NDSA…AEGS) and 132-243 (LAKT…DAEM). Low complexity predominate over residues 145–157 (SAGSGAEESNSSS). Residues S148 and S189 each carry the phosphoserine modification. Acidic residues predominate over residues 233-243 (DDDDDDDDAEM).

This sequence belongs to the UPF0688 family.

The protein resides in the nucleus. This chain is UPF0688 protein C1orf174 (C1orf174), found in Homo sapiens (Human).